The chain runs to 237 residues: Cysteine-rich venom protein tigrin (237 aa).

The first 18 residues, 1–18, serve as a signal peptide directing secretion; it reads MIVFILLSLAAVLRQSFG. The 129-residue stretch at 37 to 165 folds into the SCP domain; sequence VNIHNSFRRS…LYNYFYVCQY (129 aa). 8 disulfides stabilise this stretch: Cys-74–Cys-152, Cys-91–Cys-166, Cys-147–Cys-163, Cys-185–Cys-192, Cys-188–Cys-197, Cys-201–Cys-232, Cys-210–Cys-226, and Cys-217–Cys-230. Residues 201–232 form the ShKT domain; sequence CTHKDDYNNCNSLVSDCQSDWDKSHCPATCFC.

Belongs to the CRISP family. In terms of tissue distribution, expressed by the venom gland.

Its subcellular location is the secreted. Functionally, this protein does not inhibit smooth muscle contraction elicited by high potassium levels or caffeine. The chain is Cysteine-rich venom protein tigrin from Rhabdophis tigrinus tigrinus (Tiger keelback snake).